The sequence spans 474 residues: Aspartyl protease family protein At5g10770 (474 aa).

An N-terminal signal peptide occupies residues 1-25 (MSINRNLLNIIIILCICLNLGCNDG). Positions 132–469 (YIVTVGLGTP…DGAGGRVGFA (338 aa)) constitute a Peptidase A1 domain. Catalysis depends on residues aspartate 150 and aspartate 352. Cysteine 391 and cysteine 432 are disulfide-bonded. Asparagine 443 carries the GPI-anchor amidated asparagine lipid modification. Positions 444–474 (AAIFGNVQQQTLEVVYDGAGGRVGFAPNGCS) are cleaved as a propeptide — removed in mature form.

Belongs to the peptidase A1 family.

It is found in the cell membrane. In terms of biological role, probably not redundant with AED1 and not involved in restriction of salicylic acid (SA) or systemic acquired resistance (SAR) signaling. The sequence is that of Aspartyl protease family protein At5g10770 from Arabidopsis thaliana (Mouse-ear cress).